Here is a 352-residue protein sequence, read N- to C-terminus: Histidine biosynthesis bifunctional protein HisB (352 aa).

The histidinol-phosphatase stretch occupies residues 1 to 163; that stretch reads MKKILFIDRD…MVASAIINDA (163 aa). Residue D8 is the Nucleophile of the active site. D8 and D10 together coordinate Mg(2+). The active-site Proton donor is the D10. C91, H93, C99, and C101 together coordinate Zn(2+). Mg(2+) is bound at residue D128. Positions 164 to 352 are imidazoleglycerol-phosphate dehydratase; the sequence is RKASVQRKTK…NYLPSTKGVL (189 aa).

In the N-terminal section; belongs to the histidinol-phosphatase family. The protein in the C-terminal section; belongs to the imidazoleglycerol-phosphate dehydratase family. Requires Mg(2+) as cofactor. The cofactor is Zn(2+).

It localises to the cytoplasm. The enzyme catalyses D-erythro-1-(imidazol-4-yl)glycerol 3-phosphate = 3-(imidazol-4-yl)-2-oxopropyl phosphate + H2O. It catalyses the reaction L-histidinol phosphate + H2O = L-histidinol + phosphate. It participates in amino-acid biosynthesis; L-histidine biosynthesis; L-histidine from 5-phospho-alpha-D-ribose 1-diphosphate: step 6/9. Its pathway is amino-acid biosynthesis; L-histidine biosynthesis; L-histidine from 5-phospho-alpha-D-ribose 1-diphosphate: step 8/9. The sequence is that of Histidine biosynthesis bifunctional protein HisB from Legionella pneumophila (strain Lens).